The following is a 369-amino-acid chain: Protein RIC-3 (369 aa).

Residues 1-28 form the signal peptide; that stretch reads MAYSTVQRVALASGLVLALSLLLPKAFL. Residues 29 to 95 are Lumenal-facing; sequence SRGKRQEPPP…AGGGGSGRGL (67 aa). Residues 30–67 form a disordered region; that stretch reads RGKRQEPPPTPEGKLGRFPPMMHHHQAPSDGQTPGARF. A helical transmembrane segment spans residues 96-116; that stretch reads MGQIIPIYGFGIFLYILYILF. Residues 117–369 are Cytoplasmic-facing; sequence KLSKGKTTAE…LRKRNPQGLE (253 aa). Residues 140–169 are a coiled coil; the sequence is RKITSFELAQLQEKLKETEAAMEKLINRVG. An N6-acetyllysine; alternate modification is found at Lys202. Lys202 participates in a covalent cross-link: Glycyl lysine isopeptide (Lys-Gly) (interchain with G-Cter in ubiquitin); alternate. Disordered regions lie at residues 272–295 and 316–369; these read ESDH…SVTS and LAEN…QGLE. The segment covering 332–346 has biased composition (basic and acidic residues); that stretch reads ETTKEEWSQDFKDEG. Residues 360 to 369 show a composition bias toward basic residues; the sequence is LRKRNPQGLE.

The protein belongs to the ric-3 family. As to quaternary structure, monomer and homodimer. Interacts with CHRNA7, CHRNA3, CHRNA4, CHRNB2, CHRNB4 and HTR3A. Broadly expressed, with high levels in muscle, brain, heart, pancreas and testis. In the central nervous system, highest levels are detected in the cerebellum and pituitary gland. Over-expressed in brains from patients with bipolar disease or schizophrenia. Isoform 5 is predominantly expressed in the brain.

Its subcellular location is the endoplasmic reticulum membrane. It is found in the golgi apparatus membrane. Its function is as follows. Molecular chaperone which facilitates proper subunit assembly and surface trafficking of alpha-7 (CHRNA7) and alpha-8 (CHRNA8) nicotinic acetylcholine receptors. May also promote functional expression of homomeric serotoninergic 5-HT3 receptors, and of heteromeric acetylcholine receptors alpha-3/beta-2, alpha-3/beta-4, alpha-4/beta-2 and alpha-4/beta-4. This is Protein RIC-3 (RIC3) from Homo sapiens (Human).